Consider the following 469-residue polypeptide: ATP-dependent protease ATPase subunit HslU (469 aa).

Residues I24, 66–71 (GVGKTE), D282, E347, and R419 contribute to the ATP site.

This sequence belongs to the ClpX chaperone family. HslU subfamily. As to quaternary structure, a double ring-shaped homohexamer of HslV is capped on each side by a ring-shaped HslU homohexamer. The assembly of the HslU/HslV complex is dependent on binding of ATP.

The protein resides in the cytoplasm. In terms of biological role, ATPase subunit of a proteasome-like degradation complex; this subunit has chaperone activity. The binding of ATP and its subsequent hydrolysis by HslU are essential for unfolding of protein substrates subsequently hydrolyzed by HslV. HslU recognizes the N-terminal part of its protein substrates and unfolds these before they are guided to HslV for hydrolysis. The sequence is that of ATP-dependent protease ATPase subunit HslU from Listeria monocytogenes serovar 1/2a (strain ATCC BAA-679 / EGD-e).